A 233-amino-acid chain; its full sequence is MSGLFVSFEGVDGVGKTTQVERLRAYLEAQGRTVVVTREPGGTVLGKAIRQLLLHGVDGGAVDIAPRAEALLFAADRAQHVAETIRPALERGEVVITDRYLDSSLAYQAGGRELTPEEIRSLSMWATNNLLPDRTYLLDMDPALSHNRLEHAEDRMESAGSDFQSRTRQAFLDLAAAEPNRFHVIDASQSIEQVWSAIEADIQTLLRDNVADVDTVMARSGASTGAVTMGGVR.

An ATP-binding site is contributed by 10–17 (GVDGVGKT).

The protein belongs to the thymidylate kinase family.

It catalyses the reaction dTMP + ATP = dTDP + ADP. Phosphorylation of dTMP to form dTDP in both de novo and salvage pathways of dTTP synthesis. The chain is Thymidylate kinase from Bifidobacterium longum subsp. infantis (strain ATCC 15697 / DSM 20088 / JCM 1222 / NCTC 11817 / S12).